We begin with the raw amino-acid sequence, 455 residues long: Bleomycin hydrolase (455 aa).

Met1 carries the N-acetylmethionine modification. Catalysis depends on residues Cys73 and His372. Lys391 bears the N6-acetyllysine mark. Residue Asn396 is part of the active site.

It belongs to the peptidase C1 family. In terms of assembly, homohexamer. Interacts with NUDT12 (via ANK repeats).

It localises to the cytoplasm. The protein localises to the cytoplasmic granule. The enzyme catalyses Inactivates bleomycin B2 (a cytotoxic glycometallopeptide) by hydrolysis of a carboxyamide bond of beta-aminoalanine, but also shows general aminopeptidase activity. The specificity varies somewhat with source, but amino acid arylamides of Met, Leu and Ala are preferred.. In terms of biological role, the normal physiological role of BLM hydrolase is unknown, but it catalyzes the inactivation of the antitumor drug BLM (a glycopeptide) by hydrolyzing the carboxamide bond of its B-aminoalaninamide moiety thus protecting normal and malignant cells from BLM toxicity. In Mus musculus (Mouse), this protein is Bleomycin hydrolase (Blmh).